The sequence spans 326 residues: Ribosomal RNA small subunit methyltransferase H (326 aa).

Residues 45-47 (GGH), aspartate 65, aspartate 113, and glutamine 120 contribute to the S-adenosyl-L-methionine site. The disordered stretch occupies residues 299–326 (PSAEEITRNPRSRSARLRAAERIAHDGR). Positions 316–326 (RAAERIAHDGR) are enriched in basic and acidic residues.

Belongs to the methyltransferase superfamily. RsmH family.

The protein resides in the cytoplasm. It catalyses the reaction cytidine(1402) in 16S rRNA + S-adenosyl-L-methionine = N(4)-methylcytidine(1402) in 16S rRNA + S-adenosyl-L-homocysteine + H(+). Specifically methylates the N4 position of cytidine in position 1402 (C1402) of 16S rRNA. This Thermomicrobium roseum (strain ATCC 27502 / DSM 5159 / P-2) protein is Ribosomal RNA small subunit methyltransferase H.